The following is a 155-amino-acid chain: 1,4-dihydroxy-2-naphthoyl-CoA hydrolase (155 aa).

Residue aspartate 22 is part of the active site.

Belongs to the 4-hydroxybenzoyl-CoA thioesterase family. DHNA-CoA hydrolase subfamily.

It carries out the reaction 1,4-dihydroxy-2-naphthoyl-CoA + H2O = 1,4-dihydroxy-2-naphthoate + CoA + H(+). Its pathway is cofactor biosynthesis; phylloquinone biosynthesis. It functions in the pathway quinol/quinone metabolism; 1,4-dihydroxy-2-naphthoate biosynthesis; 1,4-dihydroxy-2-naphthoate from chorismate: step 7/7. Catalyzes the hydrolysis of 1,4-dihydroxy-2-naphthoyl-CoA (DHNA-CoA) to 1,4-dihydroxy-2-naphthoate (DHNA), a reaction involved in phylloquinone (vitamin K1) biosynthesis. This Prochlorococcus marinus (strain SARG / CCMP1375 / SS120) protein is 1,4-dihydroxy-2-naphthoyl-CoA hydrolase.